The sequence spans 114 residues: uncharacterized protein (114 aa).

The interval 1–24 (MFGACYKQPLKPSGSEPPAEECRM) is disordered.

As to expression, expressed in kidney and liver.

This is an uncharacterized protein from Homo sapiens (Human).